A 521-amino-acid chain; its full sequence is Potassium/proton antiporter CemA (521 aa).

The next 5 membrane-spanning stretches (helical) occupy residues 68–88 (FVFI…LLNI), 294–314 (ALAS…ISFP), 399–419 (ILHL…FISG), 446–466 (ILLL…EILI), and 481–501 (IISC…KYWI).

This sequence belongs to the CemA family.

It localises to the plastid. The protein resides in the chloroplast inner membrane. It carries out the reaction K(+)(in) + H(+)(out) = K(+)(out) + H(+)(in). Contributes to K(+)/H(+) antiport activity by supporting proton efflux to control proton extrusion and homeostasis in chloroplasts in a light-dependent manner to modulate photosynthesis. Prevents excessive induction of non-photochemical quenching (NPQ) under continuous-light conditions. Indirectly promotes efficient inorganic carbon uptake into chloroplasts. This chain is Potassium/proton antiporter CemA, found in Huperzia lucidula (Shining clubmoss).